We begin with the raw amino-acid sequence, 282 residues long: BURP domain-containing protein BNM2A (282 aa).

Residues 1 to 26 (MASLRFSVTFPALLSLLLLSLWVVEA) form the signal peptide. The BURP domain occupies 60-282 (FFKISDLKLG…PLDNIVWVSK (223 aa)).

In terms of tissue distribution, expressed in the radicle and cotyledon of germinating seeds 2 days post-imbibition (DPI), in stems and roots of 30-DPI young plants and in floral buds, but not in fully open flowers or leaves. Expressed in the embryo and seed coat tissues of developing seeds. The protein accumulates only in seeds and only long after transcript accumulation becomes evident.

The protein localises to the protein storage vacuole. This is BURP domain-containing protein BNM2A from Brassica napus (Rape).